The chain runs to 616 residues: Homeodomain-interacting protein kinase 4 (616 aa).

The 337-residue stretch at 11–347 (YDIIEVLGKG…PSAALRHPFV (337 aa)) folds into the Protein kinase domain. Residues 17–25 (LGKGTFGEV) and K40 each bind ATP. D136 acts as the Proton acceptor in catalysis. Residues 487–616 (HKARKAPAGS…SFLQHVGGHH (130 aa)) form a disordered region. Over residues 497–512 (KSDSNFSNLIRLSQAS) the composition is skewed to polar residues. S512 carries the post-translational modification Phosphoserine. Positions 542-560 (REGDGPSIKDRPMDAERSG) are enriched in basic and acidic residues.

Belongs to the protein kinase superfamily. CMGC Ser/Thr protein kinase family. HIPK subfamily. In terms of processing, autophosphorylated.

The protein resides in the cytoplasm. It catalyses the reaction L-seryl-[protein] + ATP = O-phospho-L-seryl-[protein] + ADP + H(+). It carries out the reaction L-threonyl-[protein] + ATP = O-phospho-L-threonyl-[protein] + ADP + H(+). In terms of biological role, protein kinase that phosphorylates TP53, and thus induces TP53 repression of BIRC5 promoter. May act as a corepressor of transcription factors (Potential). This Rattus norvegicus (Rat) protein is Homeodomain-interacting protein kinase 4 (Hipk4).